Reading from the N-terminus, the 264-residue chain is uncharacterized protein (264 aa).

A run of 4 helical transmembrane segments spans residues 43-63 (VVAAACTLPADSLFAVMLYLI), 68-88 (FLPSTLFIVNFSLVLLALLGI), 96-116 (ILPALVWKCVLLLFLLFLGCI), and 150-170 (LAAKYPMLPFIAVACTIVLAV). The interval 216–247 (SYEDALKNSSQQPSTSSSSSSPPSRPPHSVYT) is disordered. Residues 224–237 (SSQQPSTSSSSSSP) are compositionally biased toward low complexity.

It is found in the membrane. This is an uncharacterized protein from Caenorhabditis elegans.